A 212-amino-acid polypeptide reads, in one-letter code: Large ribosomal subunit protein uL3 (212 aa).

The segment covering Thr-136–Pro-155 has biased composition (polar residues). Residues Thr-136–Arg-157 form a disordered region. Gln-153 carries the N5-methylglutamine modification.

It belongs to the universal ribosomal protein uL3 family. Part of the 50S ribosomal subunit. Forms a cluster with proteins L14 and L19. In terms of processing, methylated by PrmB.

Its function is as follows. One of the primary rRNA binding proteins, it binds directly near the 3'-end of the 23S rRNA, where it nucleates assembly of the 50S subunit. The polypeptide is Large ribosomal subunit protein uL3 (Shewanella putrefaciens (strain CN-32 / ATCC BAA-453)).